Consider the following 609-residue polypeptide: RAS guanyl-releasing protein 2 (609 aa).

Residue alanine 2 is the site of N-myristoyl glycine attachment. One can recognise an N-terminal Ras-GEF domain in the interval 4-126 (TLDLDKGCTV…SLIDIDSVPT (123 aa)). Leucine 7 carries the S-palmitoyl cysteine lipid modification. A phosphoserine mark is found at serine 116, serine 117, and serine 147. The Ras-GEF domain maps to 154–387 (EPMELAEHLT…YQLSLQREPR (234 aa)). The disordered stretch occupies residues 382-406 (LQREPRSKSSPTSPTSCTPPPRPPV). EF-hand domains lie at 426–461 (HIEK…FPYL) and 455–490 (RGNF…SSSV). Residues aspartate 439, aspartate 441, aspartate 443, histidine 445, glutamate 450, aspartate 468, asparagine 470, aspartate 472, cysteine 474, and glutamate 479 each coordinate Ca(2+). The Phorbol-ester/DAG-type zinc-finger motif lies at 498 to 548 (VHNFQESNSLRPVACRHCKALILGIYKQGLKCRACGVNCHKQCKDRLSVEC). 2 positions are modified to phosphoserine: serine 554 and serine 576. Positions 557–592 (LEGSAPSPSPMHSHHHRAFSFSLPRPGRRGSRPPEI) are disordered.

Belongs to the RASGRP family. As to quaternary structure, forms a signaling complex with RAP1 and BRAF. Interacts with RAP1. Interacts with F-actin. Isoform 2 is palmitoylated and myristoylated. Detected in platelets, neutrophils and T lymphocytes (at protein level). Expressed in brain where it is enriched in the striatum. Also expressed in the hematopoietic system. Detected in heart, brain, lung, placenta, liver, skeletal muscle and kidney.

It localises to the cytoplasm. Its subcellular location is the cytosol. The protein localises to the cell membrane. The protein resides in the synapse. It is found in the synaptosome. It localises to the cell projection. Its subcellular location is the ruffle membrane. Isoform 1 and isoform 2 are differently regulated by calcium and DAG. Its function is as follows. Functions as a calcium- and DAG-regulated nucleotide exchange factor specifically activating Rap through the exchange of bound GDP for GTP. May also activate other GTPases such as RRAS, RRAS2, NRAS, KRAS but not HRAS. Functions in aggregation of platelets and adhesion of T-lymphocytes and neutrophils probably through inside-out integrin activation. May function in the muscarinic acetylcholine receptor M1/CHRM1 signaling pathway. The polypeptide is RAS guanyl-releasing protein 2 (RASGRP2) (Homo sapiens (Human)).